The sequence spans 1134 residues: MPVFHTRTIESILEPVAQQISHLVIMHEEGEVDGKAIPDLTAPVAAVQAAVSNLVRVGKETVQTTEDQILKRDMPPAFIKVENACTKLVQAAQMLQSDPYSVPARDYLIDGSRGILSGTSDLLLTFDEAEVRKIIRVCKGILEYLTVAEVVETMEDLVTYTKNLGPGMTKMAKMIDERQQELTHQEHRVMLVNSMNTVKELLPVLISAMKIFVTTKNSKNQGIEEALKNRNFTVEKMSAEINEIIRVLQLTSWDEDAWASKDTEAMKRALASIDSKLNQAKGWLRDPSASPGDAGEQAIRQILDEAGKVGELCAGKERREILGTCKMLGQMTDQVADLRARGQGSSPVAMQKAQQVSQGLDVLTAKVENAARKLEAMTNSKQSIAKKIDAAQNWLADPNGGPEGEEQIRGALAEARKIAELCDDPKERDDILRSLGEISALTSKLADLRRQGKGDSPEARALAKQVATALQNLQTKTNRAVANSRPAKAAVHLEGKIEQAQRWIDNPTVDDRGVGQAAIRGLVAEGHRLANVMMGPYRQDLLAKCDRVDQLTAQLADLAARGEGESPQARALASQLQDSLKDLKARMQEAMTQEVSDVFSDTTTPIKLLAVAATAPPDAPNREEVFDERAANFENHSGKLGATAEKAAAVGTANKSTVEGIQASVKTARELTPQVVSAARILLRNPGNQAAYEHFETMKNQWIDNVEKMTGLVDEAIDTKSLLDASEEAIKKDLDKCKVAMANIQPQMLVAGATSIARRANRILLVAKREVENSEDPKFREAVKAASDELSKTISPMVMDAKAVAGNISDPGLQKSFLDSGYRILGAVAKVREAFQPQEPDFPPPPPDLEQLRLTDELAPPKPPLPEGEVPPPRPPPPEEKDEEFPEQKAGEVINQPMMMAARQLHDEARKWSSKPGIPAAEVGIGVVAEADAADAAGFPVPPDMEDDYEPELLLMPSNQPVNQPILAAAQSLHREATKWSSKGNDIIAAAKRMALLMAEMSRLVRGGSGTKRALIQCAKDIAKASDEVTRLAKEVAKQCTDKRIRTNLLQVCERIPTISTQLKILSTVKATMLGRTNISDEESEQATEMLVHNAQNLMQSVKETVREAEAASIKIRTDAGFTLRWVRKTPWYQ.

Residues 1-835 (MPVFHTRTIE…GAVAKVREAF (835 aa)) are N-terminal globular head. S97 carries the phosphoserine modification. Positions 168 to 208 (MTKMAKMIDERQQELTHQEHRVMLVNSMNTVKELLPVLISA) are talin-interaction. Position 173 is an N6-acetyllysine (K173). A run of 3 repeats spans residues 259 to 369 (ASKD…KVEN), 370 to 479 (AARK…KTNR), and 480 to 589 (AVAN…RMQE). The tract at residues 259-589 (ASKDTEAMKR…LKDLKARMQE (331 aa)) is 3 X 112 AA tandem repeats. 7 positions are modified to phosphoserine: S260, S272, S275, S288, S290, S346, and S434. An N6-acetyllysine modification is found at K496. Position 537 is a phosphotyrosine (Y537). Residues S574, S579, and S600 each carry the phosphoserine modification. T604 and T672 each carry phosphothreonine. Residue S721 is modified to Phosphoserine. The interaction with ACTN4 stretch occupies residues 741 to 764 (MANIQPQMLVAGATSIARRANRIL). Phosphoserine is present on residues S795 and S809. Y822 carries the phosphotyrosine modification. Residues 836 to 878 (QPQEPDFPPPPPDLEQLRLTDELAPPKPPLPEGEVPPPRPPPP) form a linker (Pro-rich) region. Positions 857–887 (ELAPPKPPLPEGEVPPPRPPPPEEKDEEFPE) are disordered. Over residues 860-876 (PPKPPLPEGEVPPPRPP) the composition is skewed to pro residues. Positions 879 to 1134 (EEKDEEFPEQ…RWVRKTPWYQ (256 aa)) are C-terminal tail. 2 facilitates phospholipid membrane insertion regions span residues 1003–1046 (RLVR…KRIR) and 1120–1134 (AGFT…PWYQ). At Y1133 the chain carries Phosphotyrosine; by SRC-type Tyr-kinases.

It belongs to the vinculin/alpha-catenin family. In terms of assembly, exhibits self-association properties. Part of a complex composed of THSD1, PTK2/FAK1, TLN1 and VCL. Interacts with APBB1IP and NRAP. Interacts with TLN1. Interacts with CTNNB1 and this interaction is necessary for its localization to the cell-cell junctions and for its function in regulating cell surface expression of E-cadherin. Interacts with SYNM. Interacts with SORBS1. Interacts with CTNNA1. Binds to ACTN4; this interaction triggers conformational changes. Interacts with FLII. As to quaternary structure, (Microbial infection) Interacts via its globular head domain with the central portion of S.flexneri IcsA (also called VirG). Post-translationally, phosphorylated; on serines, threonines and tyrosines. Phosphorylation on Tyr-1133 in activated platelets affects head-tail interactions and cell spreading but has no effect on actin binding nor on localization to focal adhesion plaques. Acetylated; mainly by myristic acid but also by a small amount of palmitic acid. As to expression, metavinculin is muscle-specific.

It is found in the cell membrane. Its subcellular location is the cell junction. The protein resides in the adherens junction. It localises to the focal adhesion. The protein localises to the cytoplasm. It is found in the cytoskeleton. Its subcellular location is the sarcolemma. The protein resides in the cell projection. It localises to the podosome. In terms of biological role, actin filament (F-actin)-binding protein involved in cell-matrix adhesion and cell-cell adhesion. Regulates cell-surface E-cadherin expression and potentiates mechanosensing by the E-cadherin complex. May also play important roles in cell morphology and locomotion. The polypeptide is Vinculin (VCL) (Homo sapiens (Human)).